The following is a 120-amino-acid chain: Large ribosomal subunit protein uL18 (120 aa).

Residues 1–26 (MKLTRRESKQRRHRRVRGKVQGSPER) form a disordered region. A compositionally biased stretch (basic residues) spans 8-18 (SKQRRHRRVRG).

The protein belongs to the universal ribosomal protein uL18 family. As to quaternary structure, part of the 50S ribosomal subunit; part of the 5S rRNA/L5/L18/L25 subcomplex. Contacts the 5S and 23S rRNAs.

This is one of the proteins that bind and probably mediate the attachment of the 5S RNA into the large ribosomal subunit, where it forms part of the central protuberance. In Trichormus variabilis (strain ATCC 29413 / PCC 7937) (Anabaena variabilis), this protein is Large ribosomal subunit protein uL18.